A 262-amino-acid chain; its full sequence is MSLLNLSGVRLSHGGHLVLDRVDLTVDAGRIITVVGPNGAGKSSLLKVALGLLRPDAGTVERGAKVIGYVPQRLDIGRLLPLSVRRFLAMAVAERPPAGRLEETLDLVGAGHVLGRQVVDLSGGEMQRVLLARALLRRPDLLVLDEPVGGVDVAGQAELYDLITGQAREHGVGVLMVSHDLHVVMAATDHVVCLNRHVCCAGHPETVSRHPEYLALFGPRVAASLAIYTHAHDHGHGADGSVLPLAEGGGEPHTHGPGCRHG.

One can recognise an ABC transporter domain in the interval 4–220 (LNLSGVRLSH…PEYLALFGPR (217 aa)). 36-43 (GPNGAGKS) serves as a coordination point for ATP. Residues 238–262 (ADGSVLPLAEGGGEPHTHGPGCRHG) are disordered.

It belongs to the ABC transporter superfamily. Zinc importer (TC 3.A.1.15.5) family. As to quaternary structure, the complex is composed of two ATP-binding proteins (ZnuC), two transmembrane proteins (ZnuB) and a solute-binding protein (ZnuA).

It is found in the cell inner membrane. It carries out the reaction Zn(2+)(out) + ATP(in) + H2O(in) = Zn(2+)(in) + ADP(in) + phosphate(in) + H(+)(in). Its function is as follows. Part of the ABC transporter complex ZnuABC involved in zinc import. Responsible for energy coupling to the transport system. This is Zinc import ATP-binding protein ZnuC from Paramagnetospirillum magneticum (strain ATCC 700264 / AMB-1) (Magnetospirillum magneticum).